Consider the following 31-residue polypeptide: Alpha-conotoxin Li1.12 (31 aa).

Positions 1–15 (AGNAKMSALMALTIR) are excised as a propeptide. Cystine bridges form between cysteine 17–cysteine 23 and cysteine 18–cysteine 30. Cysteine 30 is subject to Cysteine amide.

This sequence belongs to the conotoxin A superfamily. As to expression, expressed by the venom duct.

Its subcellular location is the secreted. Functionally, alpha-conotoxins act on postsynaptic membranes, they bind to the nicotinic acetylcholine receptors (nAChR) and thus inhibit them. This toxin inhibits alpha-3-beta-4, alpha-6/alpha-3-beta-4, and alpha-2-beta-4 nAChRs. This chain is Alpha-conotoxin Li1.12, found in Conus lividus (Livid cone).